An 815-amino-acid polypeptide reads, in one-letter code: Phenylalanine--tRNA ligase beta subunit (815 aa).

The tRNA-binding domain occupies 39-148; it reads ATELQKFEVA…EYAVVGDNFT (110 aa). The region spanning 420–495 is the B5 domain; that stretch reads LQKIPLDFSV…RIYGYDKIES (76 aa). Residues Asp473, Asp479, Glu482, and Glu483 each coordinate Mg(2+). An FDX-ACB domain is found at 721–814; it reads SDFQANFRDY…ISQKFQGTLR (94 aa).

The protein belongs to the phenylalanyl-tRNA synthetase beta subunit family. Type 1 subfamily. As to quaternary structure, tetramer of two alpha and two beta subunits. Mg(2+) is required as a cofactor.

It is found in the cytoplasm. The catalysed reaction is tRNA(Phe) + L-phenylalanine + ATP = L-phenylalanyl-tRNA(Phe) + AMP + diphosphate + H(+). In Rickettsia typhi (strain ATCC VR-144 / Wilmington), this protein is Phenylalanine--tRNA ligase beta subunit.